We begin with the raw amino-acid sequence, 134 residues long: FK506-binding protein 2 (134 aa).

An N-terminal signal peptide occupies residues 1-19 (MRILLLSALFLSLTTLVLS). Residues 39 to 127 (GDTVHMHYRG…IFETELVQIE (89 aa)) form the PPIase FKBP-type domain. A Prevents secretion from ER motif is present at residues 131–134 (NDEL).

This sequence belongs to the FKBP-type PPIase family. FKBP2 subfamily.

It localises to the endoplasmic reticulum. It catalyses the reaction [protein]-peptidylproline (omega=180) = [protein]-peptidylproline (omega=0). Its activity is regulated as follows. Inhibited by both FK506 and rapamycin. PPIases accelerate the folding of proteins. It catalyzes the cis-trans isomerization of proline imidic peptide bonds in oligopeptides. The protein is FK506-binding protein 2 (fpr2) of Aspergillus fumigatus (strain ATCC MYA-4609 / CBS 101355 / FGSC A1100 / Af293) (Neosartorya fumigata).